Consider the following 426-residue polypeptide: Serine hydroxymethyltransferase (426 aa).

Residues leucine 113 and 117–119 each bind (6S)-5,6,7,8-tetrahydrofolate; that span reads GHL. An N6-(pyridoxal phosphate)lysine modification is found at lysine 222. (6S)-5,6,7,8-tetrahydrofolate is bound at residue 363-365; it reads SAF.

Belongs to the SHMT family. In terms of assembly, homodimer. The cofactor is pyridoxal 5'-phosphate.

It is found in the cytoplasm. It carries out the reaction (6R)-5,10-methylene-5,6,7,8-tetrahydrofolate + glycine + H2O = (6S)-5,6,7,8-tetrahydrofolate + L-serine. Its pathway is one-carbon metabolism; tetrahydrofolate interconversion. It participates in amino-acid biosynthesis; glycine biosynthesis; glycine from L-serine: step 1/1. Functionally, catalyzes the reversible interconversion of serine and glycine with tetrahydrofolate (THF) serving as the one-carbon carrier. This reaction serves as the major source of one-carbon groups required for the biosynthesis of purines, thymidylate, methionine, and other important biomolecules. Also exhibits THF-independent aldolase activity toward beta-hydroxyamino acids, producing glycine and aldehydes, via a retro-aldol mechanism. This is Serine hydroxymethyltransferase from Porphyromonas gingivalis (strain ATCC 33277 / DSM 20709 / CIP 103683 / JCM 12257 / NCTC 11834 / 2561).